The primary structure comprises 132 residues: Agouti-signaling protein (132 aa).

Residues 1–22 (MDVTRLLLATLLVFLCFFTVYS) form the signal peptide. N39 carries an N-linked (GlcNAc...) asparagine glycan. The interval 61–87 (HISRKEAEKKRSSKKEASMKKVARPRT) is disordered. Residues 64–79 (RKEAEKKRSSKKEASM) show a composition bias toward basic and acidic residues. Intrachain disulfides connect C93–C108, C100–C114, C107–C125, C111–C132, and C116–C123. In terms of domain architecture, Agouti spans 93–132 (CVATRDSCKPPAPACCDPCASCQCRFFRSACSCRVLSLNC).

It localises to the secreted. Functionally, involved in the regulation of melanogenesis. The binding of ASP to MC1R precludes alpha-MSH initiated signaling and thus blocks production of cAMP, leading to a down-regulation of eumelanogenesis (brown/black pigment) and thus increasing synthesis of pheomelanin (yellow/red pigment). This chain is Agouti-signaling protein (ASIP), found in Colobus polykomos (Western black-and-white colobus monkey).